The chain runs to 614 residues: Fimbrin (614 aa).

2 EF-hand domains span residues 16-50 (EEIL…DSKK) and 51-86 (GSYD…LKKG). Ca(2+) contacts are provided by Asp29, Asp31, Tyr35, Thr40, Asp66, Ser68, Arg70, and Asp75. 2 actin-binding regions span residues 98–368 (TIKG…GLEP) and 369–614 (LNEE…LMAV). Calponin-homology (CH) domains are found at residues 112–233 (EEER…RRGL), 261–364 (LPPE…NTHP), 385–495 (EREA…RMNI), and 508–614 (TLSD…LMAV).

The protein resides in the cytoplasm. It is found in the cytoskeleton. Its subcellular location is the actin patch. Its function is as follows. Binds to actin, and functionally associates with actin structures involved in the development and maintenance of cell polarity. Plays a role in cytokinesis. Plays important roles in mating and in spore formation. The protein is Fimbrin (fim1) of Schizosaccharomyces pombe (strain 972 / ATCC 24843) (Fission yeast).